Here is a 194-residue protein sequence, read N- to C-terminus: dITP/XTP pyrophosphatase (194 aa).

8-13 lines the substrate pocket; the sequence is TSNPGK. Mg(2+) is bound by residues Glu-38 and Asp-67. The Proton acceptor role is filled by Asp-67. Residues Ser-68, 152–155, Lys-175, and 180–181 contribute to the substrate site; these read FGYD and HR.

This sequence belongs to the HAM1 NTPase family. Homodimer. It depends on Mg(2+) as a cofactor.

It carries out the reaction XTP + H2O = XMP + diphosphate + H(+). It catalyses the reaction dITP + H2O = dIMP + diphosphate + H(+). The enzyme catalyses ITP + H2O = IMP + diphosphate + H(+). Its function is as follows. Pyrophosphatase that catalyzes the hydrolysis of nucleoside triphosphates to their monophosphate derivatives, with a high preference for the non-canonical purine nucleotides XTP (xanthosine triphosphate), dITP (deoxyinosine triphosphate) and ITP. Seems to function as a house-cleaning enzyme that removes non-canonical purine nucleotides from the nucleotide pool, thus preventing their incorporation into DNA/RNA and avoiding chromosomal lesions. The protein is dITP/XTP pyrophosphatase of Legionella pneumophila (strain Paris).